The sequence spans 337 residues: Heat-inducible transcription repressor HrcA (337 aa).

This sequence belongs to the HrcA family.

Its function is as follows. Negative regulator of class I heat shock genes (grpE-dnaK-dnaJ and groELS operons). Prevents heat-shock induction of these operons. This chain is Heat-inducible transcription repressor HrcA, found in Metamycoplasma arthritidis (strain 158L3-1) (Mycoplasma arthritidis).